The chain runs to 241 residues: NEP1-interacting protein 2 (241 aa).

The segment at 1–20 (MASSSSSSYRFQSGSYPLSS) is disordered. At 1–36 (MASSSSSSYRFQSGSYPLSSSPSLGNFVERIKDACH) the chain is on the lumenal, thylakoid side. Residues 37–57 (FLVSAVLGTIISAILTFFFAL) form a helical membrane-spanning segment. Over 58 to 76 (VGTLLGALTGALIGQETES) the chain is Stromal. The chain crosses the membrane as a helical span at residues 77 to 97 (GFIRGAAIGAISGAVFSIEVF). At 98 to 109 (ESSLDLWKSDES) the chain is on the lumenal, thylakoid side. A helical transmembrane segment spans residues 110-130 (GFGCFLYLIDVIVSLLSGRLV). The Stromal segment spans residues 131–241 (RERIGPAMLS…GSCPMCRRDI (111 aa)). An RING-type; atypical zinc finger spans residues 196–238 (CSVCLQDFQLGETVRSLPHCHHMFHLPCIDNWLLRHGSCPMCR).

This sequence belongs to the RING-type zinc finger family. NIP subfamily. Interacts with RPOT2.

The protein resides in the plastid. The protein localises to the chloroplast thylakoid membrane. In terms of biological role, intrinsic thylakoid membrane protein that fixes RPOT2 on the stromal side of the thylakoid membrane. The protein is NEP1-interacting protein 2 (NIP2) of Arabidopsis thaliana (Mouse-ear cress).